A 21-amino-acid chain; its full sequence is Apolipophorin 2 (21 aa).

As to expression, expressed in hemolymph.

The protein resides in the secreted. In terms of biological role, constitutes the major component of lipophorin, which mediates transport for various types of lipids in hemolymph. Acts by forming lipoprotein particles that bind lipoproteins and lipids. This is Apolipophorin 2 from Galleria mellonella (Greater wax moth).